A 390-amino-acid polypeptide reads, in one-letter code: LL-diaminopimelate aminotransferase 2 (390 aa).

Substrate-binding residues include tyrosine 13 and glycine 38. Pyridoxal 5'-phosphate-binding positions include tyrosine 67, 102–103 (SK), tyrosine 127, asparagine 177, tyrosine 208, and 236–238 (SLS). The substrate site is built by lysine 103, tyrosine 127, and asparagine 177. Lysine 239 bears the N6-(pyridoxal phosphate)lysine mark. Arginine 247 serves as a coordination point for pyridoxal 5'-phosphate. Arginine 365 contributes to the substrate binding site.

The protein belongs to the class-I pyridoxal-phosphate-dependent aminotransferase family. LL-diaminopimelate aminotransferase subfamily. In terms of assembly, homodimer. Pyridoxal 5'-phosphate is required as a cofactor.

The catalysed reaction is (2S,6S)-2,6-diaminopimelate + 2-oxoglutarate = (S)-2,3,4,5-tetrahydrodipicolinate + L-glutamate + H2O + H(+). It participates in amino-acid biosynthesis; L-lysine biosynthesis via DAP pathway; LL-2,6-diaminopimelate from (S)-tetrahydrodipicolinate (aminotransferase route): step 1/1. Its function is as follows. Involved in the synthesis of meso-diaminopimelate (m-DAP or DL-DAP), required for both lysine and peptidoglycan biosynthesis. Catalyzes the direct conversion of tetrahydrodipicolinate to LL-diaminopimelate. The polypeptide is LL-diaminopimelate aminotransferase 2 (Trichormus variabilis (strain ATCC 29413 / PCC 7937) (Anabaena variabilis)).